Reading from the N-terminus, the 270-residue chain is tRNA pseudouridine synthase A (270 aa).

Aspartate 51 acts as the Nucleophile in catalysis. Residue tyrosine 109 participates in substrate binding.

This sequence belongs to the tRNA pseudouridine synthase TruA family. Homodimer.

It carries out the reaction uridine(38/39/40) in tRNA = pseudouridine(38/39/40) in tRNA. Functionally, formation of pseudouridine at positions 38, 39 and 40 in the anticodon stem and loop of transfer RNAs. In Variovorax paradoxus (strain S110), this protein is tRNA pseudouridine synthase A.